Reading from the N-terminus, the 782-residue chain is Isoamylase 3, chloroplastic (782 aa).

The transit peptide at methionine 1–arginine 68 directs the protein to the chloroplast. Positions arginine 68–arginine 81 are enriched in polar residues. A disordered region spans residues arginine 68–glycine 88. Aspartate 445 serves as the catalytic Nucleophile. The active-site Proton donor is glutamate 482.

This sequence belongs to the glycosyl hydrolase 13 family. In terms of tissue distribution, expressed in leaves. Expressed at low levels in developing endosperm.

The protein resides in the plastid. It localises to the chloroplast. Its subcellular location is the amyloplast. The catalysed reaction is Hydrolysis of (1-&gt;6)-alpha-D-glucosidic branch linkages in glycogen, amylopectin and their beta-limit dextrins.. Functionally, starch-debranching enzyme that plays a role in the degradation of transitory starch during the night in leaf blades, facilitates the formation of spherical amyloplasts containing compound granules in the endosperm, and affects morphological characteristics of plastids. The sequence is that of Isoamylase 3, chloroplastic from Oryza sativa subsp. japonica (Rice).